The chain runs to 230 residues: Orotidine 5'-phosphate decarboxylase (230 aa).

Substrate-binding positions include Asp10, Lys31, 58-67, Thr117, Arg179, Gln188, Gly208, and Arg209; that span reads DLKLHDIPNT. The active-site Proton donor is Lys60.

It belongs to the OMP decarboxylase family. Type 1 subfamily. In terms of assembly, homodimer.

The catalysed reaction is orotidine 5'-phosphate + H(+) = UMP + CO2. The protein operates within pyrimidine metabolism; UMP biosynthesis via de novo pathway; UMP from orotate: step 2/2. Catalyzes the decarboxylation of orotidine 5'-monophosphate (OMP) to uridine 5'-monophosphate (UMP). The chain is Orotidine 5'-phosphate decarboxylase from Staphylococcus aureus (strain Mu3 / ATCC 700698).